Consider the following 673-residue polypeptide: MATSQRKILVTSALPYANGPIHLGHMLEYIQTDIWARFQKLRGHECHYICADDAHGTPIMLKAQQLSMAPEEMIAQVQKEHQQDFADFNIQFDNFHSTHSDENRELASEIYLKLRDGGYIKSKTISQLFDPEKSMFLPDRFVKGTCPKCKSVDQYGDNCDSCGATYSPTDLIDPKSAVSGATPVMKETEHFFFDLPAFEDMLKEWTRSGSLQQEMANKLGEWFEQGLQQWDITRDAPYFGFEIPDAPGKFFYVWLDAPIGYMGSFKNLCNKRSDLNFDEFWAKDSTAEVYHFIGKDIVYFHSLFWPAMLEGAGFRKPNSVYAHGYVTVNGAKMSKSKGTFIKARTYLDNLNPEYLRYYYAAKLSSRIDDLDLNLEDFAQRVNSDLVGKLVNLASRTAGFISKRFDGKLAKVADASLTETFLAKADAIAEFYETREFGKAMREIMALADIANAFVADAAPWQLVKEEDKQEEAHQVCSNALNLFRILVTYLKPVLPKLAQDVEAFLQLELTWDDLAKDLSGHEIAPFKALMQRVEMKNIEAIIEASTENLQVAEAPKSQLDLDPISEEISFDDFAKLDLRIARIAKAEHVPDANKLLKLQLDLGGETKQVFAGIKSAYAPEDLEGKLTVMVANLAPRKMRFGMSEGMVLAAGPGKKDLWILEPHEGAQPGMRVK.

The short motif at 15 to 25 (PYANGPIHLGH) is the 'HIGH' region element. Residues Cys-146, Cys-149, Cys-159, and Cys-162 each contribute to the Zn(2+) site. The short motif at 332 to 336 (KMSKS) is the 'KMSKS' region element. Residue Lys-335 coordinates ATP. The tRNA-binding domain maps to 572 to 673 (DFAKLDLRIA…EGAQPGMRVK (102 aa)).

It belongs to the class-I aminoacyl-tRNA synthetase family. MetG type 1 subfamily. Homodimer. Zn(2+) serves as cofactor.

It localises to the cytoplasm. The enzyme catalyses tRNA(Met) + L-methionine + ATP = L-methionyl-tRNA(Met) + AMP + diphosphate. Functionally, is required not only for elongation of protein synthesis but also for the initiation of all mRNA translation through initiator tRNA(fMet) aminoacylation. This is Methionine--tRNA ligase from Shewanella loihica (strain ATCC BAA-1088 / PV-4).